Consider the following 177-residue polypeptide: Pyruvate synthase subunit PorC (177 aa).

Heterotetramer of one alpha, one beta, one delta and one gamma chain.

The enzyme catalyses 2 oxidized [2Fe-2S]-[ferredoxin] + pyruvate + CoA = 2 reduced [2Fe-2S]-[ferredoxin] + acetyl-CoA + CO2 + H(+). The sequence is that of Pyruvate synthase subunit PorC (porC) from Methanothermobacter marburgensis (strain ATCC BAA-927 / DSM 2133 / JCM 14651 / NBRC 100331 / OCM 82 / Marburg) (Methanobacterium thermoautotrophicum).